We begin with the raw amino-acid sequence, 308 residues long: Aspartate carbamoyltransferase catalytic subunit (308 aa).

The carbamoyl phosphate site is built by R55 and T56. K85 is a binding site for L-aspartate. Residues R106, H135, and Q138 each contribute to the carbamoyl phosphate site. L-aspartate-binding residues include R168 and R229. Residues L267 and P268 each coordinate carbamoyl phosphate.

The protein belongs to the aspartate/ornithine carbamoyltransferase superfamily. ATCase family. Heterododecamer (2C3:3R2) of six catalytic PyrB chains organized as two trimers (C3), and six regulatory PyrI chains organized as three dimers (R2).

The enzyme catalyses carbamoyl phosphate + L-aspartate = N-carbamoyl-L-aspartate + phosphate + H(+). It participates in pyrimidine metabolism; UMP biosynthesis via de novo pathway; (S)-dihydroorotate from bicarbonate: step 2/3. Its function is as follows. Catalyzes the condensation of carbamoyl phosphate and aspartate to form carbamoyl aspartate and inorganic phosphate, the committed step in the de novo pyrimidine nucleotide biosynthesis pathway. The protein is Aspartate carbamoyltransferase catalytic subunit of Laribacter hongkongensis (strain HLHK9).